A 319-amino-acid chain; its full sequence is ATP-dependent 6-phosphofructokinase (319 aa).

G11 is a binding site for ATP. 21 to 25 (RAVVR) is an ADP binding site. Residues 72-73 (RS) and 102-105 (GDGS) each bind ATP. A Mg(2+)-binding site is contributed by D103. Position 125-127 (125-127 (TID)) interacts with substrate. Residue D127 is the Proton acceptor of the active site. Position 154 (R154) interacts with ADP. Residues R162 and 169-171 (MGR) contribute to the substrate site. Residues 185–187 (GAE) and 213–215 (KMH) each bind ADP. Residues E222, R243, and 249-252 (HIQR) contribute to the substrate site.

The protein belongs to the phosphofructokinase type A (PFKA) family. ATP-dependent PFK group I subfamily. Prokaryotic clade 'B1' sub-subfamily. As to quaternary structure, homotetramer. It depends on Mg(2+) as a cofactor.

The protein localises to the cytoplasm. It catalyses the reaction beta-D-fructose 6-phosphate + ATP = beta-D-fructose 1,6-bisphosphate + ADP + H(+). Its pathway is carbohydrate degradation; glycolysis; D-glyceraldehyde 3-phosphate and glycerone phosphate from D-glucose: step 3/4. With respect to regulation, allosterically activated by ADP and other diphosphonucleosides, and allosterically inhibited by phosphoenolpyruvate. Its function is as follows. Catalyzes the phosphorylation of D-fructose 6-phosphate to fructose 1,6-bisphosphate by ATP, the first committing step of glycolysis. The polypeptide is ATP-dependent 6-phosphofructokinase (Clostridium tetani (strain Massachusetts / E88)).